The following is a 393-amino-acid chain: S-adenosylmethionine synthase (393 aa).

Glu9 contributes to the Mg(2+) binding site. His15 contributes to the ATP binding site. Glu43 is a K(+) binding site. L-methionine is bound by residues Glu56 and Gln99. ATP is bound by residues 167-169, 235-238, Asp246, 252-253, Ala269, Lys273, and Lys277; these read DGK, SGRF, and RK. Asp246 is a binding site for L-methionine. Lys277 contributes to the L-methionine binding site.

This sequence belongs to the AdoMet synthase family. As to quaternary structure, homotetramer. It depends on Mn(2+) as a cofactor. Requires Mg(2+) as cofactor. The cofactor is Co(2+). K(+) is required as a cofactor.

It is found in the cytoplasm. The catalysed reaction is L-methionine + ATP + H2O = S-adenosyl-L-methionine + phosphate + diphosphate. The protein operates within amino-acid biosynthesis; S-adenosyl-L-methionine biosynthesis; S-adenosyl-L-methionine from L-methionine: step 1/1. In terms of biological role, catalyzes the formation of S-adenosylmethionine from methionine and ATP. The reaction comprises two steps that are both catalyzed by the same enzyme: formation of S-adenosylmethionine (AdoMet) and triphosphate, and subsequent hydrolysis of the triphosphate. The polypeptide is S-adenosylmethionine synthase (SAMS) (Solanum palustre (Non-tuber-performing potato)).